The chain runs to 929 residues: ATP-dependent DNA helicase PIF1 (929 aa).

Residues 1–52 (MLRRLLQPAYNVALSGTSASTLPRKSASVGLVRTALMPVDYNAGALFCAMRF) constitute a mitochondrion transit peptide. Residues 55-89 (GTEKERKREPKRGSKRRSKATTTLSTPTDAQTSVT) form a disordered region. Positions 56-66 (TEKERKREPKR) are enriched in basic and acidic residues. The segment covering 74 to 89 (ATTTLSTPTDAQTSVT) has biased composition (polar residues). 302-309 (GSAGTGKT) contacts ATP. A DNA-binding region spans residues 776–796 (HLLYVAMSRVRNPEQLSMSSF). The interval 902 to 929 (HERRQKKMAVEGAKQTDTTKASSGESLE) is disordered. The span at 916-929 (QTDTTKASSGESLE) shows a compositional bias: polar residues.

The protein belongs to the helicase family. PIF1 subfamily. Monomer. The cofactor is Mg(2+).

It is found in the mitochondrion. It carries out the reaction Couples ATP hydrolysis with the unwinding of duplex DNA at the replication fork by translocating in the 5'-3' direction. This creates two antiparallel DNA single strands (ssDNA). The leading ssDNA polymer is the template for DNA polymerase III holoenzyme which synthesizes a continuous strand.. The enzyme catalyses ATP + H2O = ADP + phosphate + H(+). In terms of biological role, DNA-dependent ATPase and probable 5'-3' DNA helicase required for the maintenance of mitochondrial (kinetoplast) genome stability. Essential for replication of kinetoplast minicircles. Involved in the segregation of minicircle progeny. The chain is ATP-dependent DNA helicase PIF1 from Trypanosoma brucei brucei (strain 927/4 GUTat10.1).